Here is a 134-residue protein sequence, read N- to C-terminus: Small ribosomal subunit protein uS8c (134 aa).

The protein belongs to the universal ribosomal protein uS8 family. As to quaternary structure, part of the 30S ribosomal subunit.

The protein resides in the plastid. Its subcellular location is the chloroplast. Its function is as follows. One of the primary rRNA binding proteins, it binds directly to 16S rRNA central domain where it helps coordinate assembly of the platform of the 30S subunit. This Aethionema grandiflorum (Persian stone-cress) protein is Small ribosomal subunit protein uS8c (rps8).